The sequence spans 371 residues: N-acetyldiaminopimelate deacetylase (371 aa).

D68 is an active-site residue. The active-site Proton acceptor is the E127.

The protein belongs to the peptidase M20A family. N-acetyldiaminopimelate deacetylase subfamily.

It catalyses the reaction N-acetyl-(2S,6S)-2,6-diaminopimelate + H2O = (2S,6S)-2,6-diaminopimelate + acetate. The protein operates within amino-acid biosynthesis; L-lysine biosynthesis via DAP pathway; LL-2,6-diaminopimelate from (S)-tetrahydrodipicolinate (acetylase route): step 3/3. In terms of biological role, catalyzes the conversion of N-acetyl-diaminopimelate to diaminopimelate and acetate. This Halalkalibacterium halodurans (strain ATCC BAA-125 / DSM 18197 / FERM 7344 / JCM 9153 / C-125) (Bacillus halodurans) protein is N-acetyldiaminopimelate deacetylase.